Here is a 147-residue protein sequence, read N- to C-terminus: Globin, major monomeric component (147 aa).

In terms of domain architecture, Globin spans G1–Q146. H90 is a binding site for heme b.

It belongs to the globin family. Monomer.

In Glycera dibranchiata (Bloodworm), this protein is Globin, major monomeric component.